Consider the following 387-residue polypeptide: MDLFEYQAKGLFAKHNVPTTPGRVTDTAEGARAIATEIGHPVMVKAQVKIGGRGKAGGVKYAATPDDAYEHANNILGLDIKGHVVKKLLVAEASDIAEEYYISFLLDRANRTYLAMCSVEGGMEIEEVAATKPDRLAKVPVDAAKGVDLAFARSIAEQGHLPAEVLDAAAVTISKLWDLFVGEDATLVEVNPLVRTPDDQILALDGKVTLDANADFRHPDHVEFEDRAATDPLELKAKEHDLNYVKLDGQVGIIGNGAGLVMSTLDVVAYAGEKHGGVKPANFLDIGGGASAEVMAAGLDVVLGDSQVKSVFVNVFGGITSCDAVATGIVKALEILGAEANKPLVVRLDGNNVEEGRRILTDANHPLVTLVPTMDEAADKAAELASA.

An ATP-grasp domain is found at 9–236 (KGLFAKHNVP…RAATDPLELK (228 aa)). ATP contacts are provided by residues Lys45, 52-54 (GRG), Ser94, and Glu99. Mg(2+) contacts are provided by Asn191 and Asp205. Substrate contacts are provided by residues Asn256 and 318–320 (GIT).

The protein belongs to the succinate/malate CoA ligase beta subunit family. As to quaternary structure, heterotetramer of two alpha and two beta subunits. Mg(2+) serves as cofactor.

It catalyses the reaction succinate + ATP + CoA = succinyl-CoA + ADP + phosphate. The catalysed reaction is GTP + succinate + CoA = succinyl-CoA + GDP + phosphate. It participates in carbohydrate metabolism; tricarboxylic acid cycle; succinate from succinyl-CoA (ligase route): step 1/1. Its function is as follows. Succinyl-CoA synthetase functions in the citric acid cycle (TCA), coupling the hydrolysis of succinyl-CoA to the synthesis of either ATP or GTP and thus represents the only step of substrate-level phosphorylation in the TCA. The beta subunit provides nucleotide specificity of the enzyme and binds the substrate succinate, while the binding sites for coenzyme A and phosphate are found in the alpha subunit. The chain is Succinate--CoA ligase [ADP-forming] subunit beta from Mycobacterium ulcerans (strain Agy99).